We begin with the raw amino-acid sequence, 252 residues long: Aspartate/glutamate leucyltransferase (252 aa).

This sequence belongs to the R-transferase family. Bpt subfamily.

Its subcellular location is the cytoplasm. The enzyme catalyses N-terminal L-glutamyl-[protein] + L-leucyl-tRNA(Leu) = N-terminal L-leucyl-L-glutamyl-[protein] + tRNA(Leu) + H(+). The catalysed reaction is N-terminal L-aspartyl-[protein] + L-leucyl-tRNA(Leu) = N-terminal L-leucyl-L-aspartyl-[protein] + tRNA(Leu) + H(+). Its function is as follows. Functions in the N-end rule pathway of protein degradation where it conjugates Leu from its aminoacyl-tRNA to the N-termini of proteins containing an N-terminal aspartate or glutamate. The polypeptide is Aspartate/glutamate leucyltransferase (Xanthomonas campestris pv. campestris (strain B100)).